A 58-amino-acid chain; its full sequence is Large ribosomal subunit protein uL30 (58 aa).

Belongs to the universal ribosomal protein uL30 family. Part of the 50S ribosomal subunit.

The sequence is that of Large ribosomal subunit protein uL30 from Desulfovibrio desulfuricans (strain ATCC 27774 / DSM 6949 / MB).